We begin with the raw amino-acid sequence, 523 residues long: Katanin p60 ATPase-containing subunit A1 (523 aa).

The disordered stretch occupies residues 82–215 (KEAPTGRRAA…DGKSKRGLYE (134 aa)). Positions 178 to 194 (AGARSSTAGKKGAASKS) are enriched in low complexity. 279 to 286 (GPPGTGKT) is an ATP binding site.

Belongs to the AAA ATPase family. Katanin p60 subunit A1 subfamily. In terms of assembly, may homooligomerize. Component of KTN80-KTN1 complexes composed of a hexamer of KTN1-KTN80 heterodimers that sense microtubule (MT) geometry to confer precise MT severing. Interacts directly with KTN80.1, KTN80.2, KTN80.3 and KTN80.4. Can interact with KTN80.1. May interact with the kinesin related protein KIN14A. Interacts with microtubule polymers. Binds to IPGA1. Expressed ubiquitously, including siliques, flowers, leaves, stems and roots.

It localises to the cytoplasm. Its subcellular location is the cytoskeleton. The catalysed reaction is n ATP + n H2O + a microtubule = n ADP + n phosphate + (n+1) alpha/beta tubulin heterodimers.. Its function is as follows. Severs microtubules in vitro in an ATP-dependent manner. Required for oligomerization of functional KTN80-KTN1 complexes that catalyze microtubule severing. This activity may promote rapid reorganization of cellular microtubule arrays. May be required for reorientation of cortical microtubule arrays during cellular elongation. Failure to correctly orient these arrays drastically compromises fiber length, cell wall thickness and mechanical strength. May also be required for the spatial organization of developmental cues within the root. Involved in the IPGA1- and AN-dependent regulation of pavement cells morphogenesis leading to puzzle shape. This is Katanin p60 ATPase-containing subunit A1 from Arabidopsis thaliana (Mouse-ear cress).